The sequence spans 397 residues: MPRGDFVDPPPVNWDLVKDEALWKILSGAAERQIDCKNADRFEVSVDFLLQQVAWLTERHASQVRAQVRKATAAVRNSGPSPVPSGEPAGSGHQRAHSALSFRRDSPRNEAGSGTGTPLHSSMRPLVARNTSTNTTVLRDMTGAPASPRPGVGLASRAGDRRRLSSLPITSVPDKSLEQTAQPELSPEERSPSPGPAEDSSPTSSDDESIPAQSRIIRRPPRYQPPDGGQYEDDDDDESEPAFQPYTSPSSKTSAQDLGSTLRGDKPVSGKRPHKSHGKPAIHKSNTSDSSASSAAIIQKPDKTDRSTEQRTPGPLSPHRPAELTGRSPGGKDKGYSREGSEGTPSMGSSYSDLDDASVTQSALEEALASHMNSRGAGSRFSISQAFRSRYTSSSNQ.

The segment at 71–397 (ATAAVRNSGP…RSRYTSSSNQ (327 aa)) is disordered. Positions 230–240 (QYEDDDDDESE) are enriched in acidic residues. Residues 245–259 (PYTSPSSKTSAQDLG) show a composition bias toward polar residues. Residues 269-282 (SGKRPHKSHGKPAI) show a composition bias toward basic residues. 2 stretches are compositionally biased toward basic and acidic residues: residues 300 to 309 (KPDKTDRSTE) and 330 to 341 (GGKDKGYSREGS). Polar residues-rich tracts occupy residues 343 to 363 (GTPS…TQSA) and 381 to 397 (FSIS…SSNQ).

Belongs to the ATG29 family. As to quaternary structure, forms a stable complex with ATG17 and ATG31. Interacts directly with ATG31. The ATG17-ATG29-ATG31 complex interacts with the ATG1-ATG13 complex. Note=The interaction with the ATG1-ATG13 complex is induced by starvation.

It localises to the preautophagosomal structure. Functionally, plays a role in autophagy. Functions at the preautophagosomal structure (PAS) in order to form normal autophagosomes under starvation conditions. Also plays a role in mitophagy. Autophagy is required for proper vegetative growth, asexual/sexual reproduction, and full virulence. Autophagy is particularly involved in the biosynthesis of deoxynivalenol (DON), an important virulence determinant. This is Autophagy-related protein 29 from Gibberella zeae (strain ATCC MYA-4620 / CBS 123657 / FGSC 9075 / NRRL 31084 / PH-1) (Wheat head blight fungus).